A 166-amino-acid polypeptide reads, in one-letter code: Protein-export protein SecB (166 aa).

The protein belongs to the SecB family. As to quaternary structure, homotetramer, a dimer of dimers. One homotetramer interacts with 1 SecA dimer.

The protein resides in the cytoplasm. Its function is as follows. One of the proteins required for the normal export of preproteins out of the cell cytoplasm. It is a molecular chaperone that binds to a subset of precursor proteins, maintaining them in a translocation-competent state. It also specifically binds to its receptor SecA. The chain is Protein-export protein SecB from Actinobacillus succinogenes (strain ATCC 55618 / DSM 22257 / CCUG 43843 / 130Z).